Here is a 164-residue protein sequence, read N- to C-terminus: Phosphopantetheine adenylyltransferase (164 aa).

Residue Ser10 coordinates substrate. Residues 10 to 11 (SF) and His18 each bind ATP. Positions 42, 74, and 88 each coordinate substrate. ATP is bound by residues 89–91 (GLR), Glu99, and 124–130 (YFFVSAR).

The protein belongs to the bacterial CoaD family. Homohexamer. It depends on Mg(2+) as a cofactor.

The protein localises to the cytoplasm. The catalysed reaction is (R)-4'-phosphopantetheine + ATP + H(+) = 3'-dephospho-CoA + diphosphate. It participates in cofactor biosynthesis; coenzyme A biosynthesis; CoA from (R)-pantothenate: step 4/5. Functionally, reversibly transfers an adenylyl group from ATP to 4'-phosphopantetheine, yielding dephospho-CoA (dPCoA) and pyrophosphate. The sequence is that of Phosphopantetheine adenylyltransferase from Anaeromyxobacter dehalogenans (strain 2CP-1 / ATCC BAA-258).